Here is a 279-residue protein sequence, read N- to C-terminus: Phosphatidylglycerol--prolipoprotein diacylglyceryl transferase (279 aa).

3 consecutive transmembrane segments (helical) span residues 22–42 (WYGIIIACGILLGYFIAQAAL), 52–72 (LIDIIFYSAIVGFIVARIYFV), and 89–109 (IWHGGIAIHGGLIGGLISGII). An a 1,2-diacyl-sn-glycero-3-phospho-(1'-sn-glycerol)-binding site is contributed by Arg137. 2 helical membrane passes run 203–223 (LGETFFGYLIWYSVGRFFVEA) and 235–255 (IRVAQLVSVVLIMISVIFVIY).

This sequence belongs to the Lgt family.

It localises to the cell membrane. The catalysed reaction is L-cysteinyl-[prolipoprotein] + a 1,2-diacyl-sn-glycero-3-phospho-(1'-sn-glycerol) = an S-1,2-diacyl-sn-glyceryl-L-cysteinyl-[prolipoprotein] + sn-glycerol 1-phosphate + H(+). The protein operates within protein modification; lipoprotein biosynthesis (diacylglyceryl transfer). Catalyzes the transfer of the diacylglyceryl group from phosphatidylglycerol to the sulfhydryl group of the N-terminal cysteine of a prolipoprotein, the first step in the formation of mature lipoproteins. This is Phosphatidylglycerol--prolipoprotein diacylglyceryl transferase from Staphylococcus epidermidis (strain ATCC 35984 / DSM 28319 / BCRC 17069 / CCUG 31568 / BM 3577 / RP62A).